The chain runs to 326 residues: Beta-ketoacyl-[acyl-carrier-protein] synthase III (326 aa).

Residues Cys112 and His251 contribute to the active site. Residues Gln252–Arg256 are ACP-binding. Asn281 is an active-site residue.

Belongs to the thiolase-like superfamily. FabH family. As to quaternary structure, homodimer.

It is found in the cytoplasm. The enzyme catalyses malonyl-[ACP] + acetyl-CoA + H(+) = 3-oxobutanoyl-[ACP] + CO2 + CoA. Its pathway is lipid metabolism; fatty acid biosynthesis. Catalyzes the condensation reaction of fatty acid synthesis by the addition to an acyl acceptor of two carbons from malonyl-ACP. Catalyzes the first condensation reaction which initiates fatty acid synthesis and may therefore play a role in governing the total rate of fatty acid production. Possesses both acetoacetyl-ACP synthase and acetyl transacylase activities. Its substrate specificity determines the biosynthesis of branched-chain and/or straight-chain of fatty acids. The sequence is that of Beta-ketoacyl-[acyl-carrier-protein] synthase III from Clostridium botulinum (strain 657 / Type Ba4).